Consider the following 209-residue polypeptide: Ribosomal RNA large subunit methyltransferase E (209 aa).

The S-adenosyl-L-methionine site is built by Gly63, Trp65, Asp83, Asp99, and Asp124. The active-site Proton acceptor is the Lys164.

Belongs to the class I-like SAM-binding methyltransferase superfamily. RNA methyltransferase RlmE family.

Its subcellular location is the cytoplasm. It carries out the reaction uridine(2552) in 23S rRNA + S-adenosyl-L-methionine = 2'-O-methyluridine(2552) in 23S rRNA + S-adenosyl-L-homocysteine + H(+). Its function is as follows. Specifically methylates the uridine in position 2552 of 23S rRNA at the 2'-O position of the ribose in the fully assembled 50S ribosomal subunit. The protein is Ribosomal RNA large subunit methyltransferase E of Colwellia psychrerythraea (strain 34H / ATCC BAA-681) (Vibrio psychroerythus).